The primary structure comprises 168 residues: DOMON domain-containing protein CBG21753 (168 aa).

Positions 1–17 (MIKSMILVALILAFASA) are cleaved as a signal peptide. The DOMON domain occupies 25-143 (SGFQSYWRFA…CQKWRWIKSG (119 aa)). Asn-35 and Asn-94 each carry an N-linked (GlcNAc...) asparagine glycan. Positions 148–168 (GQLTRNSKSPKDKKVCPMECN) are disordered. Residues 156-168 (SPKDKKVCPMECN) are compositionally biased toward basic and acidic residues.

It is found in the secreted. In Caenorhabditis briggsae, this protein is DOMON domain-containing protein CBG21753.